We begin with the raw amino-acid sequence, 628 residues long: 1-deoxy-D-xylulose-5-phosphate synthase (628 aa).

Thiamine diphosphate-binding positions include H72 and 113–115; that span reads GHA. Position 144 (D144) interacts with Mg(2+). Residues 145–146, N174, Y287, and E370 contribute to the thiamine diphosphate site; that span reads GA. Residue N174 coordinates Mg(2+).

This sequence belongs to the transketolase family. DXPS subfamily. As to quaternary structure, homodimer. The cofactor is Mg(2+). Thiamine diphosphate is required as a cofactor.

The enzyme catalyses D-glyceraldehyde 3-phosphate + pyruvate + H(+) = 1-deoxy-D-xylulose 5-phosphate + CO2. The protein operates within metabolic intermediate biosynthesis; 1-deoxy-D-xylulose 5-phosphate biosynthesis; 1-deoxy-D-xylulose 5-phosphate from D-glyceraldehyde 3-phosphate and pyruvate: step 1/1. Functionally, catalyzes the acyloin condensation reaction between C atoms 2 and 3 of pyruvate and glyceraldehyde 3-phosphate to yield 1-deoxy-D-xylulose-5-phosphate (DXP). The chain is 1-deoxy-D-xylulose-5-phosphate synthase from Prochlorococcus marinus (strain NATL2A).